Here is a 184-residue protein sequence, read N- to C-terminus: Ribosome-recycling factor (184 aa).

It belongs to the RRF family.

It is found in the cytoplasm. Its function is as follows. Responsible for the release of ribosomes from messenger RNA at the termination of protein biosynthesis. May increase the efficiency of translation by recycling ribosomes from one round of translation to another. The chain is Ribosome-recycling factor from Aquifex aeolicus (strain VF5).